We begin with the raw amino-acid sequence, 671 residues long: NADPH--cytochrome P450 reductase (671 aa).

Topologically, residues 1–14 are lumenal; the sequence is MSAEHVEEVVSEEP. Residues 15-35 form a helical membrane-spanning segment; sequence FLGTLDIALLVVLLVGATWYF. The Cytoplasmic segment spans residues 36-671; it reads MRSRKKEEAP…QKRYSADVWS (636 aa). One can recognise a Flavodoxin-like domain in the interval 77–221; sequence LVVFYGSQTG…DFITWKDRFW (145 aa). Residues 83–88, 135–138, 170–179, and Asp-205 contribute to the FMN site; these read SQTGTA, ATYG, and LGNKTYEHYN. Residues 276 to 515 enclose the FAD-binding FR-type domain; sequence KNPFLASVIV…FIRKSQFRLP (240 aa). Arg-295 serves as a coordination point for NADP(+). FAD-binding positions include 451–454, 469–471, Tyr-475, and 485–488; these read RYYS, TAV, and GVAT. NADP(+)-binding positions include Thr-529, 589–590, 595–599, and Asp-632; these read SR and KIYVT. Trp-670 contacts FAD.

It belongs to the NADPH--cytochrome P450 reductase family. In the N-terminal section; belongs to the flavodoxin family. This sequence in the C-terminal section; belongs to the flavoprotein pyridine nucleotide cytochrome reductase family. The cofactor is FAD. Requires FMN as cofactor.

It is found in the endoplasmic reticulum membrane. The catalysed reaction is 2 oxidized [cytochrome P450] + NADPH = 2 reduced [cytochrome P450] + NADP(+) + H(+). Functionally, this enzyme is required for electron transfer from NADP to cytochrome P450 in microsomes. It can also provide electron transfer to heme oxygenase and cytochrome B5. This chain is NADPH--cytochrome P450 reductase, found in Musca domestica (House fly).